The primary structure comprises 160 residues: N-acetyltransferase Pat (160 aa).

The region spanning 5 to 148 (IKIRKATKED…VYGEMRLTER (144 aa)) is the N-acetyltransferase domain. Leu79, Val81, Thr87, Gly89, Gly91, Thr92, Asn118, Lys123, and Lys127 together coordinate CoA.

Belongs to the acetyltransferase family. GNAT subfamily.

It carries out the reaction L-lysyl-[protein] + acetyl-CoA = N(6)-acetyl-L-lysyl-[protein] + CoA + H(+). Its function is as follows. Modulates activity of albA1, the major archaeal DNA compaction protein, by decreasing albA1's nucleic acid binding affinity through acetylation of 'Lys-16'. The chain is N-acetyltransferase Pat from Saccharolobus solfataricus (strain ATCC 35092 / DSM 1617 / JCM 11322 / P2) (Sulfolobus solfataricus).